We begin with the raw amino-acid sequence, 385 residues long: S-adenosylmethionine synthase (385 aa).

Position 15 (histidine 15) interacts with ATP. Residue aspartate 17 coordinates Mg(2+). Glutamate 43 is a K(+) binding site. The L-methionine site is built by glutamate 56 and glutamine 99. Residues glutamine 99–arginine 109 form a flexible loop region. Residues aspartate 164–lysine 166, arginine 230–phenylalanine 231, aspartate 239, arginine 245–lysine 246, alanine 262, and lysine 266 each bind ATP. Position 239 (aspartate 239) interacts with L-methionine. Position 270 (lysine 270) interacts with L-methionine.

It belongs to the AdoMet synthase family. Homotetramer; dimer of dimers. It depends on Mg(2+) as a cofactor. The cofactor is K(+).

It is found in the cytoplasm. The enzyme catalyses L-methionine + ATP + H2O = S-adenosyl-L-methionine + phosphate + diphosphate. The protein operates within amino-acid biosynthesis; S-adenosyl-L-methionine biosynthesis; S-adenosyl-L-methionine from L-methionine: step 1/1. In terms of biological role, catalyzes the formation of S-adenosylmethionine (AdoMet) from methionine and ATP. The overall synthetic reaction is composed of two sequential steps, AdoMet formation and the subsequent tripolyphosphate hydrolysis which occurs prior to release of AdoMet from the enzyme. This chain is S-adenosylmethionine synthase, found in Sodalis glossinidius (strain morsitans).